Consider the following 62-residue polypeptide: Large ribosomal subunit protein bL28 (62 aa).

This sequence belongs to the bacterial ribosomal protein bL28 family.

This chain is Large ribosomal subunit protein bL28, found in Halalkalibacterium halodurans (strain ATCC BAA-125 / DSM 18197 / FERM 7344 / JCM 9153 / C-125) (Bacillus halodurans).